Reading from the N-terminus, the 69-residue chain is Putative membrane protein insertion efficiency factor (69 aa).

This sequence belongs to the UPF0161 family.

The protein resides in the cell inner membrane. Functionally, could be involved in insertion of integral membrane proteins into the membrane. This chain is Putative membrane protein insertion efficiency factor, found in Laribacter hongkongensis (strain HLHK9).